Consider the following 149-residue polypeptide: Potassium binding protein Kbp (149 aa).

One can recognise a BON domain in the interval 23–91 (DKDDQAKKVQ…SVDDQVKTAT (69 aa)). Residues 97–146 (QFYTVKSGDTLSAISKQVYGNANLYNKIFEANKPMLKSPDKIYPGQVLRI) form the LysM domain.

It is found in the cytoplasm. Functionally, highly specific potassium binding protein that is required for normal growth in the presence of high levels of external K(+). May act as a sensor of cytoplasmic K(+) concentration. The protein is Potassium binding protein Kbp of Escherichia coli O6:H1 (strain CFT073 / ATCC 700928 / UPEC).